The following is a 256-amino-acid chain: 5-keto-4-deoxy-D-glucarate aldolase (256 aa).

Residue histidine 50 is the Proton acceptor of the active site. Glutamine 151 serves as a coordination point for substrate. Glutamate 153 serves as a coordination point for Mg(2+). 2 residues coordinate substrate: serine 178 and aspartate 179. Aspartate 179 contacts Mg(2+).

This sequence belongs to the HpcH/HpaI aldolase family. KDGluc aldolase subfamily. In terms of assembly, homohexamer; trimer of dimers. The cofactor is Mg(2+).

The enzyme catalyses 5-dehydro-4-deoxy-D-glucarate = 2-hydroxy-3-oxopropanoate + pyruvate. It catalyses the reaction 2-dehydro-3-deoxy-D-glucarate = 2-hydroxy-3-oxopropanoate + pyruvate. It participates in carbohydrate acid metabolism; galactarate degradation; D-glycerate from galactarate: step 2/3. Catalyzes the reversible retro-aldol cleavage of both 5-keto-4-deoxy-D-glucarate and 2-keto-3-deoxy-D-glucarate to pyruvate and tartronic semialdehyde. The protein is 5-keto-4-deoxy-D-glucarate aldolase of Escherichia coli O157:H7 (strain EC4115 / EHEC).